A 295-amino-acid polypeptide reads, in one-letter code: Glutamyl-Q tRNA(Asp) synthetase (295 aa).

L-glutamate contacts are provided by residues 6 to 10 (RFAPS) and E42. Residues 9-19 (PSPTGAMHLGN) carry the 'HIGH' region motif. The Zn(2+) site is built by C93, C95, Y118, and C122. Residues Y177 and R195 each coordinate L-glutamate. The 'KMSKS' region motif lies at 233–237 (RLAKR). Residue K236 coordinates ATP.

The protein belongs to the class-I aminoacyl-tRNA synthetase family. GluQ subfamily. Requires Zn(2+) as cofactor.

In terms of biological role, catalyzes the tRNA-independent activation of glutamate in presence of ATP and the subsequent transfer of glutamate onto a tRNA(Asp). Glutamate is transferred on the 2-amino-5-(4,5-dihydroxy-2-cyclopenten-1-yl) moiety of the queuosine in the wobble position of the QUC anticodon. This is Glutamyl-Q tRNA(Asp) synthetase from Deinococcus radiodurans (strain ATCC 13939 / DSM 20539 / JCM 16871 / CCUG 27074 / LMG 4051 / NBRC 15346 / NCIMB 9279 / VKM B-1422 / R1).